The sequence spans 651 residues: MAARQIKDGEYTATIYKLIKEARYGEAIQILSNELQKQYRSRAGLSLLGYCYYQIQDFVNAADCYEQLIQITPEVEEYKLYYAQSLYKACMYPEAMKATFALDSSAYQSKMLKLQASIRYGEEDISGAKSLVEQMPSEDPESEINMGCLLYKEGHYEEACKKFITAMQVMGYKQDLSYNIALCYYSMKQYAPALKHIADIIERGIREHPELGVGMTTEGIEVRSVGNTLVLHETALIEAFNLKAAIEYQLKNYEAAQEALTDMPPRSEEELDPVTLHNQALMNMDTKPTEGFEKLQFLLQQNPFPPETFGNLLLLYCKYEYFDLAADVLAENAHLTYKFLTPYLYDFLDAMITCQTAPEEAFFKLDELAGMLTEQMRKLTKQVQEARHNRDDEAVKKAVNEYDETLEKYIPVLMAQAKIYWNMENYQMVEKIFRKSVEFCNEHDIWKLNVAHVLFMQDNKYKEAIGFYEPIVKKHYDNILNVSAAVLANLCVSYIMTSQNEEAEELMRKIEKEEEQIAYENPDKKIYHLCIVNLVIGTLYCAKGNYEFGISRVIKSLEPYNKKLGTDTWYHAKRCFLSLLENMSKHMIMLRDDVIAECLQFLEHCEIYGRNIPAVIEQPLEEERMHIGKNTVTYESRQLKALLYEITSWNL.

7 TPR repeats span residues 8–41, 42–75, 140–173, 175–207, 372–405, 410–443, and 445–478; these read DGEY…QYRS, RAGL…TPEV, PESE…MGYK, DLSY…GIRE, LTEQ…YDET, IPVL…CNEH, and IWKL…HYDN. The stretch at 494–521 forms a coiled coil; the sequence is YIMTSQNEEAEELMRKIEKEEEQIAYEN. One copy of the TPR 8 repeat lies at 530 to 563; sequence CIVNLVIGTLYCAKGNYEFGISRVIKSLEPYNKK.

Belongs to the TTC30/dfy-1/fleer family.

The protein resides in the cell projection. It is found in the cilium. In terms of biological role, required for polyglutamylation of axonemal tubulin. Plays a role in anterograde intraflagellar transport (IFT), the process by which cilia precursors are transported from the base of the cilium to the site of their incorporation at the tip. The sequence is that of Intraflagellar transport protein 70A (ift70a) from Xenopus tropicalis (Western clawed frog).